The primary structure comprises 116 residues: Large ribosomal subunit protein bL20 (116 aa).

The protein belongs to the bacterial ribosomal protein bL20 family.

Functionally, binds directly to 23S ribosomal RNA and is necessary for the in vitro assembly process of the 50S ribosomal subunit. It is not involved in the protein synthesizing functions of that subunit. In Mycoplasmopsis pulmonis (strain UAB CTIP) (Mycoplasma pulmonis), this protein is Large ribosomal subunit protein bL20.